A 321-amino-acid polypeptide reads, in one-letter code: tRNA pseudouridine synthase B (321 aa).

Catalysis depends on D47, which acts as the Nucleophile.

It belongs to the pseudouridine synthase TruB family. Type 1 subfamily.

The catalysed reaction is uridine(55) in tRNA = pseudouridine(55) in tRNA. Responsible for synthesis of pseudouridine from uracil-55 in the psi GC loop of transfer RNAs. The sequence is that of tRNA pseudouridine synthase B from Shewanella baltica (strain OS185).